The primary structure comprises 133 residues: Ribonuclease VapC28 (133 aa).

A PINc domain is found at 1–124; the sequence is MIVDTSAIIA…LWKGNDFGHT (124 aa). Residues Asp-4 and Asp-100 each contribute to the Mg(2+) site.

It belongs to the PINc/VapC protein family. The cofactor is Mg(2+).

Its function is as follows. Toxic component of a type II toxin-antitoxin (TA) system. An RNase. Upon expression in M.smegmatis inhibits colony formation. Its toxic effect is neutralized by coexpression with cognate antitoxin VapB28. This Mycobacterium tuberculosis (strain ATCC 25618 / H37Rv) protein is Ribonuclease VapC28.